The following is a 28-amino-acid chain: SLFELGKMILQETGKNPAQSYGAYGCNC.

As to quaternary structure, monomer. As to expression, expressed by the venom gland.

The protein resides in the secreted. Snake venom phospholipase A2 homolog that lacks enzymatic activity. Shows high myotoxic activity, neutrophil activation (demonstrated by activation induction of IL-1beta production), and slight cytotoxicity against Jurkat (leukemia T) and SK-BR-3 (breast adenocarcinoma) tumor cell lines. A model of myotoxic mechanism has been proposed: an apo Lys49-PLA2 is activated by the entrance of a hydrophobic molecule (e.g. fatty acid) at the hydrophobic channel of the protein leading to a reorientation of a monomer. This reorientation causes a transition between 'inactive' to 'active' states, causing alignment of C-terminal and membrane-docking sites (MDoS) side-by-side and putting the membrane-disruption sites (MDiS) in the same plane, exposed to solvent and in a symmetric position for both monomers. The MDoS region stabilizes the toxin on membrane by the interaction of charged residues with phospholipid head groups. Subsequently, the MDiS region destabilizes the membrane with penetration of hydrophobic residues. This insertion causes a disorganization of the membrane, allowing an uncontrolled influx of ions (i.e. calcium and sodium), and eventually triggering irreversible intracellular alterations and cell death. This is Basic phospholipase A2 homolog BmatTX-II from Bothrops mattogrossensis (Pitviper).